Here is a 573-residue protein sequence, read N- to C-terminus: Poly(ribitol-phosphate) beta-N-acetylglucosaminyltransferase TarS (573 aa).

Residues Pro-9, Asp-41, Asn-68, Arg-76, 92 to 94, Arg-127, and Glu-178 contribute to the UDP-N-acetyl-alpha-D-glucosamine site; that span reads DSD. Position 94 (Asp-94) interacts with Mn(2+). The Proton acceptor role is filled by Asp-179. UDP-N-acetyl-alpha-D-glucosamine is bound by residues Arg-207 and 211-213; that span reads HMS.

This sequence belongs to the glycosyltransferase 2 family. Homotrimer. Mn(2+) serves as cofactor.

It carries out the reaction 4-O-[(D-ribitylphospho)(n)-di{(2R)-glycerylphospho}]-N-acetyl-beta-D-mannosaminyl-(1-&gt;4)-N-acetyl-alpha-D-glucosaminyl di-trans,octa-cis-undecaprenyl diphosphate + n UDP-N-acetyl-alpha-D-glucosamine = 4-O-([2-N-acetyl-beta-D-glucosaminyl-1-D-ribitylphospho](n)-di{[2R]-1-glycerylphospho})-N-acetyl-beta-D-mannosaminyl-(1-&gt;4)-N-acetyl-alpha-D-glucosaminyl di-trans,octa-cis-undecaprenyl diphosphate + n UDP + n H(+). The protein operates within cell wall biogenesis; poly(ribitol phosphate) teichoic acid biosynthesis. Functionally, attaches beta-O-GlcNAc (beta-O-N-acetyl-D-glucosamine) residues to the C4 position of poly(RboP)-wall teichoic acids (WTAs). Prefers UDP-GlcNAc as a donor substrate and is specific for poly(ribitol phosphate) WTAs. Can also use UDP-Glc and UDP-GalNAc, but not UDP-galactose or UDP-glucuronic acid. Mediates beta-lactam resistance in methicillin resistant Staphylococcus aureus (MRSA) strains. This chain is Poly(ribitol-phosphate) beta-N-acetylglucosaminyltransferase TarS, found in Staphylococcus aureus (strain MW2).